The sequence spans 84 residues: Cryptic plasmid protein A (84 aa).

This chain is Cryptic plasmid protein A (cppA), found in Neisseria gonorrhoeae.